An 872-amino-acid chain; its full sequence is Alanine--tRNA ligase (872 aa).

H567, H571, C669, and H673 together coordinate Zn(2+).

This sequence belongs to the class-II aminoacyl-tRNA synthetase family. It depends on Zn(2+) as a cofactor.

The protein localises to the cytoplasm. The enzyme catalyses tRNA(Ala) + L-alanine + ATP = L-alanyl-tRNA(Ala) + AMP + diphosphate. In terms of biological role, catalyzes the attachment of alanine to tRNA(Ala) in a two-step reaction: alanine is first activated by ATP to form Ala-AMP and then transferred to the acceptor end of tRNA(Ala). Also edits incorrectly charged Ser-tRNA(Ala) and Gly-tRNA(Ala) via its editing domain. In Streptococcus pneumoniae (strain Hungary19A-6), this protein is Alanine--tRNA ligase.